Here is a 362-residue protein sequence, read N- to C-terminus: RNA-binding protein 4 (362 aa).

RRM domains follow at residues 2-72 and 78-148; these read VKLF…ASKN and TKLH…LSTS. A Glycyl lysine isopeptide (Lys-Gly) (interchain with G-Cter in SUMO2) cross-link involves residue Lys79. Phosphoserine is present on Ser86. Lys92 is covalently cross-linked (Glycyl lysine isopeptide (Lys-Gly) (interchain with G-Cter in SUMO2)). The CCHC-type zinc finger occupies 160-177; it reads SGCYRCGKEGHWSKECPV. Positions 196–362 are interaction with TNPO3; it reads AVRTPYTMGY…YADRARYSAF (167 aa). Residues 306-336 form a disordered region; that stretch reads RSPLRRATGPVPTVGEGYGYGHESELSQGSS. Position 307 is a phosphoserine (Ser307).

In terms of assembly, interacts with TNPO3; the interaction mediates nuclear import of the protein and is disrupted by nuclear Ran bound to GTP. Interacts with EIF4G1 and WT1. Interacts with EIF4A1; the interaction is modulated under stress-induced conditions. Interacts with AGO1. Interacts with AGO2; the interaction occurs under both cell proliferation and differentiation conditions and in an RNA- and phosphorylation-independent manner. Interacts with DDX5; the interaction occurs in an RNA-independent manner. Interacts with RBPMS; the interaction allows cooperative assembly of RNA-bound stable cell-specific alternative splicing regulatory complexes. Post-translationally, phosphorylated. Phosphorylated in vitro on Ser-307 by SRPK1. Phosphorylation on Ser-307 is induced upon cell stress signaling, which alters its subcellular localization and may modulate its activity on IRES-mediated mRNA translation. Phosphorylation on Ser-307 is induced upon cell muscle differentiation.

It is found in the nucleus. The protein localises to the nucleolus. It localises to the nucleus speckle. The protein resides in the cytoplasm. Its subcellular location is the cytoplasmic granule. Functionally, RNA-binding factor involved in multiple aspects of cellular processes like alternative splicing of pre-mRNA and translation regulation. Modulates alternative 5'-splice site and exon selection. Acts as a muscle cell differentiation-promoting factor. Activates exon skipping of the PTB pre-mRNA during muscle cell differentiation. Antagonizes the activity of the splicing factor PTBP1 to modulate muscle cell-specific exon selection of alpha tropomyosin. Binds to intronic pyrimidine-rich sequence of the TPM1 and MAPT pre-mRNAs. Required for the translational activation of PER1 mRNA in response to circadian clock. Binds directly to the 3'-UTR of the PER1 mRNA. Exerts a suppressive activity on Cap-dependent translation via binding to CU-rich responsive elements within the 3'UTR of mRNAs, a process increased under stress conditions or during myocytes differentiation. Recruits EIF4A1 to stimulate IRES-dependent translation initiation in respons to cellular stress. Associates to internal ribosome entry segment (IRES) in target mRNA species under stress conditions. Plays a role for miRNA-guided RNA cleavage and translation suppression by promoting association of AGO2-containing miRNPs with their cognate target mRNAs. Associates with miRNAs during muscle cell differentiation. Binds preferentially to 5'-CGCGCG[GCA]-3' motif in vitro. This chain is RNA-binding protein 4 (RBM4), found in Bos taurus (Bovine).